Reading from the N-terminus, the 233-residue chain is Large ribosomal subunit protein eL6z (233 aa).

The interval glutamate 175 to glutamine 195 is disordered.

The protein belongs to the eukaryotic ribosomal protein eL6 family.

The chain is Large ribosomal subunit protein eL6z (RPL6A) from Arabidopsis thaliana (Mouse-ear cress).